The primary structure comprises 452 residues: FERM domain-containing protein 8 (452 aa).

Residues 28 to 374 (MDVIIYLIND…YCIELSQSTE (347 aa)) form the FERM domain. Polar residues predominate over residues 373-387 (TESPASDSTPGNSQL). Residues 373-395 (TESPASDSTPGNSQLSEKRSKLK) form a disordered region.

The protein localises to the cytoplasm. It is found in the cytosol. The protein resides in the cell membrane. In terms of biological role, promotes the cell surface stability of RHBDF1 and RHBDF2 and prevents their degradation via the endolysosomal pathway. By acting on RHBDF proteins, involved in ADAM17-mediated ligand shedding. May negatively regulate Wnt signaling. The protein is FERM domain-containing protein 8 (frmd8) of Xenopus laevis (African clawed frog).